The chain runs to 219 residues: Ribose-5-phosphate isomerase A (219 aa).

Residues 28-31 (TGST), 81-84 (DSAD), and 94-97 (KGGG) each bind substrate. Glutamate 103 (proton acceptor) is an active-site residue. Substrate is bound at residue lysine 121.

This sequence belongs to the ribose 5-phosphate isomerase family. Homodimer.

It catalyses the reaction aldehydo-D-ribose 5-phosphate = D-ribulose 5-phosphate. It participates in carbohydrate degradation; pentose phosphate pathway; D-ribose 5-phosphate from D-ribulose 5-phosphate (non-oxidative stage): step 1/1. Functionally, catalyzes the reversible conversion of ribose-5-phosphate to ribulose 5-phosphate. This Buchnera aphidicola subsp. Schizaphis graminum (strain Sg) protein is Ribose-5-phosphate isomerase A.